Consider the following 341-residue polypeptide: Glyceraldehyde-3-phosphate dehydrogenase 3.1 (341 aa).

Residues 13 to 14 (RI), aspartate 35, and arginine 85 contribute to the NAD(+) site. D-glyceraldehyde 3-phosphate is bound by residues 157–159 (SCT), threonine 188, 217–218 (TG), and arginine 240. Cysteine 158 functions as the Nucleophile in the catalytic mechanism. Asparagine 322 is an NAD(+) binding site.

It belongs to the glyceraldehyde-3-phosphate dehydrogenase family. As to quaternary structure, homotetramer.

Its subcellular location is the cytoplasm. It catalyses the reaction D-glyceraldehyde 3-phosphate + phosphate + NAD(+) = (2R)-3-phospho-glyceroyl phosphate + NADH + H(+). Its pathway is carbohydrate degradation; glycolysis; pyruvate from D-glyceraldehyde 3-phosphate: step 1/5. In Caenorhabditis briggsae, this protein is Glyceraldehyde-3-phosphate dehydrogenase 3.1.